Here is a 340-residue protein sequence, read N- to C-terminus: MIARQPIAVLGGGSFGTALANLLAENGHVVRLWMRDPEQAEAIRTRRENPRYLKGVRVLPGIEPVTDLAATVSASELIFVVLPSSALRQVLQPVSALLDGKMLVSTTKGIEAQSFKLMSQIIEEIAPRARIGVLSGPNLAREIAEHALTASVIASEDEALCQAVQAVLHGRTFRVYASGDRFGVELGGALKNVYAIMAGMAASLGMGENTKSMLITRALAEMTRFAARLGANPMTFLGLAGVGDLIVTCTSPKSRNYQVGHALGQGLALEEAVARLGEVAEGVNTLRVLKAKAEELGVYMPLVAGLHAILFEGRTLAQVIEALMTGEPKTDVDFISTSGF.

Serine 14, phenylalanine 15, arginine 35, and lysine 108 together coordinate NADPH. 2 residues coordinate sn-glycerol 3-phosphate: lysine 108 and glycine 136. Alanine 140 is a binding site for NADPH. Sn-glycerol 3-phosphate contacts are provided by lysine 191, aspartate 244, serine 254, arginine 255, and asparagine 256. Residue lysine 191 is the Proton acceptor of the active site. Arginine 255 provides a ligand contact to NADPH. Valine 279 and glutamate 281 together coordinate NADPH.

The protein belongs to the NAD-dependent glycerol-3-phosphate dehydrogenase family.

It is found in the cytoplasm. The enzyme catalyses sn-glycerol 3-phosphate + NAD(+) = dihydroxyacetone phosphate + NADH + H(+). It carries out the reaction sn-glycerol 3-phosphate + NADP(+) = dihydroxyacetone phosphate + NADPH + H(+). The protein operates within membrane lipid metabolism; glycerophospholipid metabolism. In terms of biological role, catalyzes the reduction of the glycolytic intermediate dihydroxyacetone phosphate (DHAP) to sn-glycerol 3-phosphate (G3P), the key precursor for phospholipid synthesis. The chain is Glycerol-3-phosphate dehydrogenase [NAD(P)+] from Azotobacter vinelandii (strain DJ / ATCC BAA-1303).